Consider the following 1487-residue polypeptide: Chromosome partition protein MukB (1487 aa).

Position 34–41 (34–41) interacts with ATP; it reads GGNGAGKS. Coiled-coil stretches lie at residues 297–458, 506–601, 637–666, 781–806, 836–1109, and 1210–1266; these read GSRE…TNAL, RESQ…LEAI, LEQE…RLAS, RAAR…AKAA, EQAL…ELRT, and VEAI…LSNI. The segment at 667–784 is flexible hinge; it reads PGGSNDPRLK…EIPLFGRAAR (118 aa).

It belongs to the SMC family. MukB subfamily. Homodimerization via its hinge domain. Binds to DNA via its C-terminal region. Interacts, and probably forms a ternary complex, with MukE and MukF via its C-terminal region. The complex formation is stimulated by calcium or magnesium. Interacts with tubulin-related protein FtsZ.

It localises to the cytoplasm. The protein localises to the nucleoid. In terms of biological role, plays a central role in chromosome condensation, segregation and cell cycle progression. Functions as a homodimer, which is essential for chromosome partition. Involved in negative DNA supercoiling in vivo, and by this means organize and compact chromosomes. May achieve or facilitate chromosome segregation by condensation DNA from both sides of a centrally located replisome during cell division. This Vibrio parahaemolyticus serotype O3:K6 (strain RIMD 2210633) protein is Chromosome partition protein MukB.